Reading from the N-terminus, the 264-residue chain is Thymidylate synthase (264 aa).

Position 21 (arginine 21) interacts with dUMP. Histidine 51 contacts (6R)-5,10-methylene-5,6,7,8-tetrahydrofolate. Cysteine 146 acts as the Nucleophile in catalysis. DUMP contacts are provided by residues 166–169 (RSAD), asparagine 177, and 207–209 (HIY). Aspartate 169 serves as a coordination point for (6R)-5,10-methylene-5,6,7,8-tetrahydrofolate. Alanine 263 contacts (6R)-5,10-methylene-5,6,7,8-tetrahydrofolate.

This sequence belongs to the thymidylate synthase family. Bacterial-type ThyA subfamily. Homodimer.

It localises to the cytoplasm. It carries out the reaction dUMP + (6R)-5,10-methylene-5,6,7,8-tetrahydrofolate = 7,8-dihydrofolate + dTMP. It functions in the pathway pyrimidine metabolism; dTTP biosynthesis. Its function is as follows. Catalyzes the reductive methylation of 2'-deoxyuridine-5'-monophosphate (dUMP) to 2'-deoxythymidine-5'-monophosphate (dTMP) while utilizing 5,10-methylenetetrahydrofolate (mTHF) as the methyl donor and reductant in the reaction, yielding dihydrofolate (DHF) as a by-product. This enzymatic reaction provides an intracellular de novo source of dTMP, an essential precursor for DNA biosynthesis. The chain is Thymidylate synthase from Brucella canis (strain ATCC 23365 / NCTC 10854 / RM-666).